Here is a 561-residue protein sequence, read N- to C-terminus: Dihydroxy-acid dehydratase 3 (561 aa).

Residue Cys50 coordinates [2Fe-2S] cluster. Asp82 contributes to the Mg(2+) binding site. Position 123 (Cys123) interacts with [2Fe-2S] cluster. Residues Asp124 and Lys125 each contribute to the Mg(2+) site. An N6-carboxylysine modification is found at Lys125. Residue Cys195 participates in [2Fe-2S] cluster binding. Position 447 (Glu447) interacts with Mg(2+). Catalysis depends on Ser473, which acts as the Proton acceptor.

Belongs to the IlvD/Edd family. As to quaternary structure, homodimer. Requires [2Fe-2S] cluster as cofactor. Mg(2+) is required as a cofactor.

The enzyme catalyses (2R)-2,3-dihydroxy-3-methylbutanoate = 3-methyl-2-oxobutanoate + H2O. It carries out the reaction (2R,3R)-2,3-dihydroxy-3-methylpentanoate = (S)-3-methyl-2-oxopentanoate + H2O. Its pathway is amino-acid biosynthesis; L-isoleucine biosynthesis; L-isoleucine from 2-oxobutanoate: step 3/4. It participates in amino-acid biosynthesis; L-valine biosynthesis; L-valine from pyruvate: step 3/4. In terms of biological role, functions in the biosynthesis of branched-chain amino acids. Catalyzes the dehydration of (2R,3R)-2,3-dihydroxy-3-methylpentanoate (2,3-dihydroxy-3-methylvalerate) into 2-oxo-3-methylpentanoate (2-oxo-3-methylvalerate) and of (2R)-2,3-dihydroxy-3-methylbutanoate (2,3-dihydroxyisovalerate) into 2-oxo-3-methylbutanoate (2-oxoisovalerate), the penultimate precursor to L-isoleucine and L-valine, respectively. This Bordetella bronchiseptica (strain ATCC BAA-588 / NCTC 13252 / RB50) (Alcaligenes bronchisepticus) protein is Dihydroxy-acid dehydratase 3.